Here is a 597-residue protein sequence, read N- to C-terminus: Myrcene synthase, chloroplastic (597 aa).

Residues 1-56 (MALKLLTSLPMYNFSRVPVSSKDPILLVTSRTRNGYLARPVQCMVANKVSTSPDIL) constitute a chloroplast transit peptide. 5 residues coordinate (2E)-geranyl diphosphate: Arg-310, Asp-347, Asp-351, Arg-488, and Asp-491. Residues Asp-347 and Asp-351 each contribute to the Mg(2+) site. A DDXXD motif motif is present at residues 347 to 351 (DDVYD). Mg(2+) contacts are provided by Asp-491, Thr-495, and Glu-499.

This sequence belongs to the terpene synthase family. Tpsb subfamily. The cofactor is Mg(2+). It depends on Mn(2+) as a cofactor.

The protein resides in the plastid. It localises to the chloroplast. The enzyme catalyses (2E)-geranyl diphosphate = beta-myrcene + diphosphate. Involved in monoterpene (C10) biosynthesis. The major product is myrcene followed by minor amounts (1.2%) of the cyclic monoterpene limonene. The polypeptide is Myrcene synthase, chloroplastic (Quercus ilex (Holly oak)).